Reading from the N-terminus, the 289-residue chain is 4-hydroxy-tetrahydrodipicolinate synthase (289 aa).

Thr-46 is a pyruvate binding site. Tyr-134 acts as the Proton donor/acceptor in catalysis. Catalysis depends on Lys-162, which acts as the Schiff-base intermediate with substrate. Val-204 serves as a coordination point for pyruvate.

The protein belongs to the DapA family. As to quaternary structure, homotetramer; dimer of dimers.

It localises to the cytoplasm. It catalyses the reaction L-aspartate 4-semialdehyde + pyruvate = (2S,4S)-4-hydroxy-2,3,4,5-tetrahydrodipicolinate + H2O + H(+). The protein operates within amino-acid biosynthesis; L-lysine biosynthesis via DAP pathway; (S)-tetrahydrodipicolinate from L-aspartate: step 3/4. Functionally, catalyzes the condensation of (S)-aspartate-beta-semialdehyde [(S)-ASA] and pyruvate to 4-hydroxy-tetrahydrodipicolinate (HTPA). The chain is 4-hydroxy-tetrahydrodipicolinate synthase from Bacillus velezensis (strain DSM 23117 / BGSC 10A6 / LMG 26770 / FZB42) (Bacillus amyloliquefaciens subsp. plantarum).